The primary structure comprises 295 residues: MNETQMNRISKDKGFIAALDQSGGSTPKALLQYGIKENSYSNDEEMFNLVHEMRKRIIKSTAFNSKYILGAILFENTMYRTIDHKYTADYLWNEKNIVPFLKIDKGLSELENGVQLMKPITNLDELLKAAIEKNIFGTKMRSFIKEANSKGIKMVVDQQFELADKIANQGLVPIIEPEVDIKSTDKEKSEELLKLEISKHLSDLDKETKVMLKLSIPTKDNFYSDLMKDPHVVRIVALSGGYSQSEANERLSRNNGLIASFSRALSENLSIDQTDEEFNETLSNSIKEIYEASIT.

Glutamate 176 functions as the Proton acceptor in the catalytic mechanism. Lysine 213 (schiff-base intermediate with dihydroxyacetone-P) is an active-site residue.

Belongs to the class I fructose-bisphosphate aldolase family.

It carries out the reaction beta-D-fructose 1,6-bisphosphate = D-glyceraldehyde 3-phosphate + dihydroxyacetone phosphate. Its pathway is carbohydrate degradation; glycolysis; D-glyceraldehyde 3-phosphate and glycerone phosphate from D-glucose: step 4/4. This Clostridium acetobutylicum (strain ATCC 824 / DSM 792 / JCM 1419 / IAM 19013 / LMG 5710 / NBRC 13948 / NRRL B-527 / VKM B-1787 / 2291 / W) protein is Fructose-bisphosphate aldolase class 1.